A 463-amino-acid polypeptide reads, in one-letter code: MAALRALRCLRGVGAPVLRPGSGIRLPSQPSRGARQWQPDIEWAEQFSGAVMYPSKETAHWKPPPWNDVDILKEKAVTNMTLNFGPQHPAAHGVLRLVLELSGEMVRKCDPHIGLLHRGTEKLIEYKTYLQALPYFDRLDYVSMMCNEQAYSIAVEKLLNIQPPPRAQWIRVLFGEITRILNHIMAVTTHALDIGAMTPFFWMFEEREKMFEFYERVSGARMHAAYIRPGGVHQDLPLGLLDDIYEFSKNFSLRIDEVEEMLTNNRIWRNRTVDIGVVTAEDALNYGFSGVMLRGSGIQWDLRKTQPYDVYDQVEFDVPIGSRGDCYDRYLCRVEEMRQSLRIIEQCLNKMPPGEIKVDDAKVSPPKRAEMKTSMESLIHHFKLYTEGYQVPPGATYTAIEAPKGEFGVYLVSDGSSRPYRCKIKAPGFAHLAGLDKMSKGHMLADVVAIIGTQDIVFGEIDR.

The transit peptide at 1 to 33 directs the protein to the mitochondrion; that stretch reads MAALRALRCLRGVGAPVLRPGSGIRLPSQPSRG. Position 62 is an N6-acetyllysine (K62). R118 carries the symmetric dimethylarginine modification. Residues C326, C332, and C347 each coordinate [4Fe-4S] cluster.

The protein belongs to the complex I 49 kDa subunit family. Core subunit of respiratory chain NADH dehydrogenase (Complex I) which is composed of 45 different subunits. Component of the iron-sulfur (IP) fragment of the enzyme. Interacts with NDUFAF3. Interacts with NDUFAF7. Interacts with CERS2. The cofactor is [4Fe-4S] cluster. In terms of processing, dimethylation at Arg-118 by NDUFAF7 takes place after NDUFS2 assembles into the complex I, leading to stabilize the early intermediate complex.

Its subcellular location is the mitochondrion inner membrane. It carries out the reaction a ubiquinone + NADH + 5 H(+)(in) = a ubiquinol + NAD(+) + 4 H(+)(out). In terms of biological role, core subunit of the mitochondrial membrane respiratory chain NADH dehydrogenase (Complex I) which catalyzes electron transfer from NADH through the respiratory chain, using ubiquinone as an electron acceptor. Essential for the catalytic activity and assembly of complex I. Redox-sensitive, critical component of the oxygen-sensing pathway in the pulmonary vasculature which plays a key role in acute pulmonary oxygen-sensing and hypoxic pulmonary vasoconstriction. Plays an important role in carotid body sensing of hypoxia. Essential for glia-like neural stem and progenitor cell proliferation, differentiation and subsequent oligodendrocyte or neuronal maturation. The polypeptide is NADH dehydrogenase [ubiquinone] iron-sulfur protein 2, mitochondrial (Ndufs2) (Mus musculus (Mouse)).